The following is a 337-amino-acid chain: Protein FAM76B (337 aa).

Positions E143–T241 are disordered. Over residues S147–S159 the composition is skewed to low complexity. Over residues H166 to I187 the composition is skewed to basic residues. Basic and acidic residues predominate over residues T213 to F222. Over residues N226 to T241 the composition is skewed to polar residues. Residues K301–K326 adopt a coiled-coil conformation.

This sequence belongs to the FAM76 family.

In terms of biological role, plays a role in hematopoiesis and immune system development, and participates in the inflammatory response. In Xenopus laevis (African clawed frog), this protein is Protein FAM76B (fam76b).